Consider the following 567-residue polypeptide: MEFEKLANLFSKLETISDKTRKVQYIARFLKELKDQYKETLLLLQGTVFYPWEQKNLGIAEKGVIRAISIAYGIEKQKVEELFIKYGDLGIVAEKACEMRKQKPLLLKPLTVKDVYQTLRKIADIEGEGSQDKKIITFAKLLVNAKPKEAKYIVRLALEELRIGVGEGIIRDAIAIAFSVTPEAVEYAYSILLDFGEVVRIAKEQGEQGLWQVKLQVGRPFRVMLAIRARNVQEAFDIVGRPAMIEAKYDGFRLQIHKKGDQVWLWTRRLEDVTRQFPDVVNIVRNRVKANEIIFEAEAVGYDKKTNKFLPFQKISQRVKRKYDIEKMAKEIPVELHAFDIVYLEGEQLMKKPFKERRALLEKVIDEKEHEIQLSIGIIEKDDKKAYQFYQDCLNKGLEGVMFKNLNAPYQPGRRVGYMVKLKPTLETLDLVIVAAEWGEGKRSGWLTSFTVAALDKDTGNYLEVGEVGTGIKEKKERAEDITFEELTELLKPYIYKQEGKKVYVKPKIVVEVAYEEIQESPRYKSGFALRFPRIVRIRFDRSPKEIDTIDRIKQIYEMQRGGIHKQ.

Glu246 provides a ligand contact to ATP. Lys248 serves as the catalytic N6-AMP-lysine intermediate. Residues Arg253, Arg268, Glu298, Phe339, Arg415, and Lys421 each coordinate ATP.

It belongs to the ATP-dependent DNA ligase family. Mg(2+) serves as cofactor.

It catalyses the reaction ATP + (deoxyribonucleotide)n-3'-hydroxyl + 5'-phospho-(deoxyribonucleotide)m = (deoxyribonucleotide)n+m + AMP + diphosphate.. Functionally, DNA ligase that seals nicks in double-stranded DNA during DNA replication, DNA recombination and DNA repair. This Nanoarchaeum equitans (strain Kin4-M) protein is DNA ligase.